Here is a 228-residue protein sequence, read N- to C-terminus: Large ribosomal subunit protein uL3 (228 aa).

Positions 135-159 (MKSQRASHGNSRSHNVPGSIGMAQD) are disordered. Residues 140–150 (ASHGNSRSHNV) show a composition bias toward polar residues. Gln-158 carries the post-translational modification N5-methylglutamine.

It belongs to the universal ribosomal protein uL3 family. Part of the 50S ribosomal subunit. Forms a cluster with proteins L14 and L19. In terms of processing, methylated by PrmB.

One of the primary rRNA binding proteins, it binds directly near the 3'-end of the 23S rRNA, where it nucleates assembly of the 50S subunit. This Albidiferax ferrireducens (strain ATCC BAA-621 / DSM 15236 / T118) (Rhodoferax ferrireducens) protein is Large ribosomal subunit protein uL3.